A 289-amino-acid chain; its full sequence is Extracellular ribonuclease (289 aa).

A signal peptide spans 1–24 (MTKKLWFLPIVCLFFILGWTAPSA). A propeptide spanning residues 25-51 (SAGAPADTNLYSRLAVSTAGGTTLFPQ) is cleaved from the precursor. The tract at residues 177 to 197 (FDNGGSEYPKAPGNYYDGDSW) is disordered.

The protein localises to the secreted. Its function is as follows. Mg(2+)-activated ribonuclease which hydrolyzes RNA apparently nonspecifically into oligonucleotides with 5'-terminal phosphate. This Bacillus amyloliquefaciens (Bacillus velezensis) protein is Extracellular ribonuclease (bsn).